A 310-amino-acid chain; its full sequence is ADP-L-glycero-D-manno-heptose-6-epimerase (310 aa).

NADP(+)-binding positions include 10-11, 31-32, Lys38, Lys53, 75-79, and Asn92; these read FI, DN, and EGACS. The Proton acceptor role is filled by Tyr140. An NADP(+)-binding site is contributed by Lys144. Asn169 is a substrate binding site. Residues Val170 and Lys178 each coordinate NADP(+). Lys178 functions as the Proton acceptor in the catalytic mechanism. Substrate contacts are provided by residues Ser180, His187, 201-204, Arg209, and Tyr272; that span reads FEGS.

It belongs to the NAD(P)-dependent epimerase/dehydratase family. HldD subfamily. In terms of assembly, homopentamer. NADP(+) serves as cofactor.

The enzyme catalyses ADP-D-glycero-beta-D-manno-heptose = ADP-L-glycero-beta-D-manno-heptose. It functions in the pathway nucleotide-sugar biosynthesis; ADP-L-glycero-beta-D-manno-heptose biosynthesis; ADP-L-glycero-beta-D-manno-heptose from D-glycero-beta-D-manno-heptose 7-phosphate: step 4/4. Its function is as follows. Catalyzes the interconversion between ADP-D-glycero-beta-D-manno-heptose and ADP-L-glycero-beta-D-manno-heptose via an epimerization at carbon 6 of the heptose. The chain is ADP-L-glycero-D-manno-heptose-6-epimerase from Salmonella dublin (strain CT_02021853).